The following is an 811-amino-acid chain: Beta-catenin homolog sys-1 (811 aa).

Residues 1 to 105 (MHSTGEPQRG…SRGPAAPAQN (105 aa)) are disordered. Residues 64 to 103 (QQQQMTPQALSTQQQQQVQQQQQRQLYSSPSPSRGPAAPA) are compositionally biased toward low complexity.

Interacts with TCF transcription factor pop-1 (via N-terminal region); interaction is direct.

It localises to the nucleus. It is found in the cytoplasm. The protein resides in the cytoplasmic granule. Its subcellular location is the cytoskeleton. The protein localises to the microtubule organizing center. It localises to the centrosome. It is found in the chromosome. The protein resides in the centromere. Its subcellular location is the kinetochore. In terms of biological role, transcription coregulator. Part of the Wnt signaling asymmetry pathway, probably acting downstream of putative frizzled ligand mom-2, Wnt/frizzled receptors lin-17 and mom-5, and dishevelled homolog dsh-2. Activates or represses target gene expression, depending on upstream Wnt signals and interactions with transcription factors, such as pop-1. Required for the activation of Wnt-responsive genes in the E blastomere; thereby leading to a role in endoderm specification and gut development. Reciprocal distribution patterns of sys-1 and pop-1/TCF in the daughters of anterior-posterior cell divisions functions in specifying cell fate; a higher sys-1 to pop-1 ratio promotes the posterior cell fate, whereas a low sys-1 to pop-1 ratio promotes the anterior fate. Represses expression of homeobox ttx-3 in neuroblasts of the SIAD/SIBV lineage, perhaps acting by blocking its transcriptional activation by a complex consisting of ref-2 and pop-1. Required for early organization of the hermaphrodite, but not the male, gonad; involved in generation of regulatory cells, known as the distal tip cells (DTC), and in formation of the somatic gonadal primordium. Involved in regulating asymmetric divisions of the somatic gonadal precursor cells (SGP), Z1 and Z4. This is Beta-catenin homolog sys-1 from Caenorhabditis elegans.